Here is a 469-residue protein sequence, read N- to C-terminus: UDP-N-acetylmuramate--L-alanine ligase (469 aa).

An ATP-binding site is contributed by 112 to 118 (GTHGKTT).

It belongs to the MurCDEF family.

It is found in the cytoplasm. The catalysed reaction is UDP-N-acetyl-alpha-D-muramate + L-alanine + ATP = UDP-N-acetyl-alpha-D-muramoyl-L-alanine + ADP + phosphate + H(+). It participates in cell wall biogenesis; peptidoglycan biosynthesis. Its function is as follows. Cell wall formation. This chain is UDP-N-acetylmuramate--L-alanine ligase, found in Laribacter hongkongensis (strain HLHK9).